A 623-amino-acid polypeptide reads, in one-letter code: Peptide transporter PTR2 (623 aa).

Disordered stretches follow at residues 1 to 20 and 31 to 58; these read MVSSDFENEKQPDVVQVLTD and DYEDPKNYSTNYVDDYNPKGLRRPTPQE. The next 11 helical transmembrane spans lie at 134 to 154, 163 to 183, 191 to 211, 250 to 270, 277 to 297, 385 to 405, 418 to 438, 448 to 468, 499 to 519, 529 to 549, and 557 to 577; these read ALTNLLTFLAYVFPLIGGYLG, AIQWGVFFGFVAHLFFIFASI, NAGLGLCVIAIITLSAGSGLM, ITNVFYLAINIGAFLQIATSY, FWLAFFVPMILYIIVPIFLFI, IIFNLADSGLGSVETSLIGAM, FNPLTIIILIPILEYGLYPLL, IWRICFGFVVCSFSQIAGFVL, LFILAAAGECWAYTTAYELAY, LVYALFLVMSAFSAALSLAIT, and LHWVFLAIGLAGFLCAIVMLA.

This sequence belongs to the major facilitator superfamily. Proton-dependent oligopeptide transporter (POT/PTR) (TC 2.A.17) family.

The protein localises to the membrane. Functionally, uptake of small peptides. The chain is Peptide transporter PTR2 (PTR2) from Candida albicans (Yeast).